The following is a 335-amino-acid chain: Glyceraldehyde-3-phosphate dehydrogenase (335 aa).

NAD(+) is bound by residues 12–13 (RI), Asp34, Arg78, and Ser120. D-glyceraldehyde 3-phosphate is bound by residues 151-153 (SCT) and Thr182. Cys152 acts as the Nucleophile in catalysis. NAD(+) is bound at residue Asn183. Residues Arg197, 210 to 211 (TG), and Arg233 contribute to the D-glyceraldehyde 3-phosphate site. An NAD(+)-binding site is contributed by Asn315.

Belongs to the glyceraldehyde-3-phosphate dehydrogenase family. As to quaternary structure, homotetramer.

Its subcellular location is the cytoplasm. It catalyses the reaction D-glyceraldehyde 3-phosphate + phosphate + NAD(+) = (2R)-3-phospho-glyceroyl phosphate + NADH + H(+). Its pathway is carbohydrate degradation; glycolysis; pyruvate from D-glyceraldehyde 3-phosphate: step 1/5. Its function is as follows. Catalyzes the oxidative phosphorylation of glyceraldehyde 3-phosphate (G3P) to 1,3-bisphosphoglycerate (BPG) using the cofactor NAD. The first reaction step involves the formation of a hemiacetal intermediate between G3P and a cysteine residue, and this hemiacetal intermediate is then oxidized to a thioester, with concomitant reduction of NAD to NADH. The reduced NADH is then exchanged with the second NAD, and the thioester is attacked by a nucleophilic inorganic phosphate to produce BPG. This chain is Glyceraldehyde-3-phosphate dehydrogenase (gap), found in Geobacillus stearothermophilus (Bacillus stearothermophilus).